Here is a 2499-residue protein sequence, read N- to C-terminus: Probable polyketide synthase 22 (2499 aa).

Positions 11–430 (DNQVAIVGLG…GSNACVLLSE (420 aa)) constitute a Ketosynthase family 3 (KS3) domain. Residues Cys-177, His-316, and His-354 each act as for beta-ketoacyl synthase activity in the active site. Residues 623-656 (GITPSIIVGHSLGEVASAFCSGMIDLETACFVIY) form an acyl/malonyl transferases region. The active-site For acyl/malonyl transferase activity is the Ser-633. The N-terminal hotdog fold stretch occupies residues 922–1044 (APINQLGNKN…SRILMKSLDV (123 aa)). One can recognise a PKS/mFAS DH domain in the interval 922 to 1209 (APINQLGNKN…IASTLSTKSE (288 aa)). His-956 serves as the catalytic Proton acceptor; for dehydratase activity. Residues 1059 to 1209 (NWSTLKREQL…IASTLSTKSE (151 aa)) form a C-terminal hotdog fold region. Asp-1121 functions as the Proton donor; for dehydratase activity in the catalytic mechanism. The region spanning 2414–2491 (EKEFSIRQDI…QIINIVTTKV (78 aa)) is the Carrier domain. O-(pantetheine 4'-phosphoryl)serine is present on Ser-2451.

Pantetheine 4'-phosphate serves as cofactor.

In terms of biological role, probable polyketide synthase. The sequence is that of Probable polyketide synthase 22 (pks22) from Dictyostelium discoideum (Social amoeba).